The primary structure comprises 244 residues: MRTIKLILEYDGTNYAGWQLQPNGLSIQEVVEGALARLLKEPVRLRASGRTDAGVHARGMVAAFDTDRSIPLRAFSDGLNALLPPDIAVRSADEALPGFNPRFAATGKHYRYTIHRGERRSPLVRLQSWHVRGALNLAAMREAARHLTGERDFASFRTAGCAARTTIRRVDAVEISDDGEMLTVDVHGSGFLRNMVRIMVGTLVEVGRGKLTPEHVAQMVVCPGVVPAGPTAPPQGLCLQKVRF.

Catalysis depends on Asp52, which acts as the Nucleophile. Tyr110 lines the substrate pocket.

It belongs to the tRNA pseudouridine synthase TruA family. As to quaternary structure, homodimer.

It catalyses the reaction uridine(38/39/40) in tRNA = pseudouridine(38/39/40) in tRNA. Its function is as follows. Formation of pseudouridine at positions 38, 39 and 40 in the anticodon stem and loop of transfer RNAs. In Geobacter sulfurreducens (strain ATCC 51573 / DSM 12127 / PCA), this protein is tRNA pseudouridine synthase A.